A 297-amino-acid polypeptide reads, in one-letter code: Polyhedral envelope protein (297 aa).

This sequence belongs to the baculoviridae PE family.

Its subcellular location is the virion membrane. Its function is as follows. Major component of the polyhedra envelope. The sequence is that of Polyhedral envelope protein from Orgyia pseudotsugata (Douglas-fir tussock moth).